Consider the following 338-residue polypeptide: Tetraacyldisaccharide 4'-kinase (338 aa).

63-70 (TVGGSGKT) lines the ATP pocket.

It belongs to the LpxK family.

The catalysed reaction is a lipid A disaccharide + ATP = a lipid IVA + ADP + H(+). It participates in glycolipid biosynthesis; lipid IV(A) biosynthesis; lipid IV(A) from (3R)-3-hydroxytetradecanoyl-[acyl-carrier-protein] and UDP-N-acetyl-alpha-D-glucosamine: step 6/6. In terms of biological role, transfers the gamma-phosphate of ATP to the 4'-position of a tetraacyldisaccharide 1-phosphate intermediate (termed DS-1-P) to form tetraacyldisaccharide 1,4'-bis-phosphate (lipid IVA). This chain is Tetraacyldisaccharide 4'-kinase, found in Shewanella loihica (strain ATCC BAA-1088 / PV-4).